A 231-amino-acid chain; its full sequence is 7-cyano-7-deazaguanine synthase (231 aa).

11–21 (LSGGLDSATTM) is an ATP binding site. Zn(2+) is bound by residues cysteine 195, cysteine 205, cysteine 208, and cysteine 211.

It belongs to the QueC family. Zn(2+) is required as a cofactor.

It carries out the reaction 7-carboxy-7-deazaguanine + NH4(+) + ATP = 7-cyano-7-deazaguanine + ADP + phosphate + H2O + H(+). It functions in the pathway purine metabolism; 7-cyano-7-deazaguanine biosynthesis. Catalyzes the ATP-dependent conversion of 7-carboxy-7-deazaguanine (CDG) to 7-cyano-7-deazaguanine (preQ(0)). The chain is 7-cyano-7-deazaguanine synthase from Syntrophus aciditrophicus (strain SB).